A 610-amino-acid polypeptide reads, in one-letter code: UvrABC system protein C (610 aa).

Residues 16–94 enclose the GIY-YIG domain; that stretch reads SQPGVYRMYD…IKLYQPRYNV (79 aa). The UVR domain occupies 204–239; the sequence is DQVLTQLIARMEKASQDLAFEEAARIRDQIQAVRRV.

Belongs to the UvrC family. In terms of assembly, interacts with UvrB in an incision complex.

It localises to the cytoplasm. Its function is as follows. The UvrABC repair system catalyzes the recognition and processing of DNA lesions. UvrC both incises the 5' and 3' sides of the lesion. The N-terminal half is responsible for the 3' incision and the C-terminal half is responsible for the 5' incision. In Salmonella gallinarum (strain 287/91 / NCTC 13346), this protein is UvrABC system protein C.